The following is a 183-amino-acid chain: MSVVVGGVEYSLNNWARYEIKRRAAELESVNYYPHCEYIMPEDIVVSILGSKPNCPFLEALKRFHDFLKKRRIIFKGEYLVIPWMGAQDVADMIHHVENRINLDHLEDLAHMLKLITYHKSFDTCINQAFEHLYAFKFPDANIETHELKHIRQLEKKMYGYILRLEKLQTVLTFYIEFLLKQV.

It belongs to the asfivirus S183L family.

This is an uncharacterized protein from Ornithodoros (relapsing fever ticks).